Here is a 298-residue protein sequence, read N- to C-terminus: Nucleotide-binding protein GTNG_3015 (298 aa).

ATP is bound at residue 17-24 (GMSGAGKT). A GTP-binding site is contributed by 68 to 71 (DLRS).

This sequence belongs to the RapZ-like family.

Displays ATPase and GTPase activities. This is Nucleotide-binding protein GTNG_3015 from Geobacillus thermodenitrificans (strain NG80-2).